A 162-amino-acid chain; its full sequence is Auracyanin-A (162 aa).

Residues 1 to 22 (MKITLRMMVLAVLTAMAMVLAA) form the signal peptide. Cys-23 carries N-palmitoyl cysteine lipidation. A lipid anchor (S-diacylglycerol cysteine) is attached at Cys-23. The region spanning 42-162 (VTIEIGSKGE…PLMQGKLVVN (121 aa)) is the Plastocyanin-like domain. Residues His-81, Cys-146, His-151, and Met-155 each contribute to the Cu cation site.

In terms of assembly, monomer. Cu cation serves as cofactor.

Its subcellular location is the cell membrane. Its function is as follows. Probably a soluble electron acceptor for the integral membrane protein electron transfer alternative complex III (ACIII). The chain is Auracyanin-A from Chloroflexus aurantiacus (strain ATCC 29366 / DSM 635 / J-10-fl).